The primary structure comprises 212 residues: Large ribosomal subunit protein uL4 (212 aa).

This sequence belongs to the universal ribosomal protein uL4 family. In terms of assembly, part of the 50S ribosomal subunit.

Functionally, one of the primary rRNA binding proteins, this protein initially binds near the 5'-end of the 23S rRNA. It is important during the early stages of 50S assembly. It makes multiple contacts with different domains of the 23S rRNA in the assembled 50S subunit and ribosome. In terms of biological role, forms part of the polypeptide exit tunnel. This Phenylobacterium zucineum (strain HLK1) protein is Large ribosomal subunit protein uL4.